Reading from the N-terminus, the 226-residue chain is MRGGEQDLRAGLKALQLELTDSQVGQLLDYQDLIGKWTKVYNLTAVRDPVEMMTHHLLDSLAAVPPLRRHLRKTGQEQGACLLDVGSGAGLPGVVIAICCPEVAVTCVDTVAKKAAFIKQAALALKLPNLSGLHARVETITTLFDVICSRAFASLADFTQWSGDALASHGVWMAMKGKQPAEELASLPPTVEVFHVEQLQVPGLDAERCIVWMRCKSAAAGLDQQG.

S-adenosyl-L-methionine is bound by residues Gly86, Leu91, Val137–Glu138, and Arg150.

It belongs to the methyltransferase superfamily. RNA methyltransferase RsmG family.

It is found in the cytoplasm. It catalyses the reaction guanosine(527) in 16S rRNA + S-adenosyl-L-methionine = N(7)-methylguanosine(527) in 16S rRNA + S-adenosyl-L-homocysteine. In terms of biological role, specifically methylates the N7 position of guanine in position 527 of 16S rRNA. The protein is Ribosomal RNA small subunit methyltransferase G of Polaromonas sp. (strain JS666 / ATCC BAA-500).